The sequence spans 175 residues: Transcription factor E (175 aa).

Positions 8 to 90 constitute an HTH TFE/IIEalpha-type domain; the sequence is NDPVIQKYLH…LWTFQYENIP (83 aa).

The protein belongs to the TFE family. In terms of assembly, monomer. Interaction with RNA polymerase subunits RpoF and RpoE is necessary for Tfe stimulatory transcription activity. Able to interact with Tbp and RNA polymerase in the absence of DNA promoter. Interacts both with the preinitiation and elongation complexes.

Functionally, transcription factor that plays a role in the activation of archaeal genes transcribed by RNA polymerase. Facilitates transcription initiation by enhancing TATA-box recognition by TATA-box-binding protein (Tbp), and transcription factor B (Tfb) and RNA polymerase recruitment. Not absolutely required for transcription in vitro, but particularly important in cases where Tbp or Tfb function is not optimal. It dynamically alters the nucleic acid-binding properties of RNA polymerases by stabilizing the initiation complex and destabilizing elongation complexes. Seems to translocate with the RNA polymerase following initiation and acts by binding to the non template strand of the transcription bubble in elongation complexes. The sequence is that of Transcription factor E from Natronomonas pharaonis (strain ATCC 35678 / DSM 2160 / CIP 103997 / JCM 8858 / NBRC 14720 / NCIMB 2260 / Gabara) (Halobacterium pharaonis).